A 308-amino-acid chain; its full sequence is MGTEEPARKFYTAPMTRYAEVAAFTTVPGQGNRAGVVLDAGELTGEQMQRLAAFLEAPETVFVTRLSDGLGRVRYFTPTQEVDFCGHATVALGRVLAQAGRWRGEALELETLAGRIPLRLVLDAGGGECRVWMHQPAFGTRAVGRGWHRELAEALGLSDRLLHRGLPLAAASTGLWSVFLPLLDASLLEGLEPDLPRIAELSRELGVVSVYAYAPVGVNRFAARDFAPLVGIPEDPVTGSAGGALLALLASEGRLPLRGNRASGLIYQGHALGTPGEIEVEVEVRGTRVEAVQVGGCAAVEREGVWPG.

E59 is an active-site residue.

The protein belongs to the PhzF family.

This is an uncharacterized protein from Deinococcus radiodurans (strain ATCC 13939 / DSM 20539 / JCM 16871 / CCUG 27074 / LMG 4051 / NBRC 15346 / NCIMB 9279 / VKM B-1422 / R1).